A 376-amino-acid chain; its full sequence is Queuine tRNA-ribosyltransferase (376 aa).

The Proton acceptor role is filled by D90. Substrate is bound by residues 90–94, D144, Q193, and G220; that span reads DSGGF. The RNA binding stretch occupies residues 251 to 257; it reads GVGTPED. The Nucleophile role is filled by D270. Residues 275–279 are RNA binding; important for wobble base 34 recognition; sequence TRNAR. Residues C308, C310, C313, and H339 each contribute to the Zn(2+) site.

The protein belongs to the queuine tRNA-ribosyltransferase family. Homodimer. Within each dimer, one monomer is responsible for RNA recognition and catalysis, while the other monomer binds to the replacement base PreQ1. Zn(2+) serves as cofactor.

It carries out the reaction 7-aminomethyl-7-carbaguanine + guanosine(34) in tRNA = 7-aminomethyl-7-carbaguanosine(34) in tRNA + guanine. Its pathway is tRNA modification; tRNA-queuosine biosynthesis. Catalyzes the base-exchange of a guanine (G) residue with the queuine precursor 7-aminomethyl-7-deazaguanine (PreQ1) at position 34 (anticodon wobble position) in tRNAs with GU(N) anticodons (tRNA-Asp, -Asn, -His and -Tyr). Catalysis occurs through a double-displacement mechanism. The nucleophile active site attacks the C1' of nucleotide 34 to detach the guanine base from the RNA, forming a covalent enzyme-RNA intermediate. The proton acceptor active site deprotonates the incoming PreQ1, allowing a nucleophilic attack on the C1' of the ribose to form the product. After dissociation, two additional enzymatic reactions on the tRNA convert PreQ1 to queuine (Q), resulting in the hypermodified nucleoside queuosine (7-(((4,5-cis-dihydroxy-2-cyclopenten-1-yl)amino)methyl)-7-deazaguanosine). This is Queuine tRNA-ribosyltransferase from Cupriavidus metallidurans (strain ATCC 43123 / DSM 2839 / NBRC 102507 / CH34) (Ralstonia metallidurans).